The primary structure comprises 89 residues: Small ribosomal subunit protein uS15 (89 aa).

The protein belongs to the universal ribosomal protein uS15 family. In terms of assembly, part of the 30S ribosomal subunit. Forms a bridge to the 50S subunit in the 70S ribosome, contacting the 23S rRNA.

In terms of biological role, one of the primary rRNA binding proteins, it binds directly to 16S rRNA where it helps nucleate assembly of the platform of the 30S subunit by binding and bridging several RNA helices of the 16S rRNA. Functionally, forms an intersubunit bridge (bridge B4) with the 23S rRNA of the 50S subunit in the ribosome. This is Small ribosomal subunit protein uS15 from Escherichia coli O157:H7.